We begin with the raw amino-acid sequence, 259 residues long: Phosphate import ATP-binding protein PstB 2 (259 aa).

Positions 12 to 254 (ISARGLNVHY…PKEPLTQGYI (243 aa)) constitute an ABC transporter domain. Residue 44–51 (GPSGCGKS) participates in ATP binding.

The protein belongs to the ABC transporter superfamily. Phosphate importer (TC 3.A.1.7) family. In terms of assembly, the complex is composed of two ATP-binding proteins (PstB), two transmembrane proteins (PstC and PstA) and a solute-binding protein (PstS).

The protein localises to the cell inner membrane. The catalysed reaction is phosphate(out) + ATP + H2O = ADP + 2 phosphate(in) + H(+). In terms of biological role, part of the ABC transporter complex PstSACB involved in phosphate import. Responsible for energy coupling to the transport system. The chain is Phosphate import ATP-binding protein PstB 2 from Paramagnetospirillum magneticum (strain ATCC 700264 / AMB-1) (Magnetospirillum magneticum).